The sequence spans 439 residues: Glutamine synthetase (439 aa).

Residues 12–93 form the GS beta-grasp domain; that stretch reads RSPKFVQLIF…VYGYIYKDGK (82 aa). In terms of domain architecture, GS catalytic spans 99-439; sequence PRGVLKRVIE…EWELERYFFI (341 aa). 2 residues coordinate Mg(2+): Glu-122 and Glu-124. Residue Glu-172 coordinates ATP. Mg(2+) is bound by residues Glu-177 and Glu-184. Residue Gly-229 participates in L-glutamate binding. His-233 serves as a coordination point for Mg(2+). ATP is bound by residues 235–237 and Ser-237; that span reads HIS. Residues Arg-283, Glu-289, and Arg-301 each coordinate L-glutamate. ATP-binding residues include Arg-301 and Arg-306. Position 318 (Glu-318) interacts with Mg(2+). Residue Arg-320 coordinates L-glutamate.

The protein belongs to the glutamine synthetase family. As to quaternary structure, oligomer of 12 subunits arranged in the form of two hexagons. Mg(2+) is required as a cofactor.

Its subcellular location is the cytoplasm. The catalysed reaction is L-glutamate + NH4(+) + ATP = L-glutamine + ADP + phosphate + H(+). Functionally, probably involved in nitrogen metabolism via ammonium assimilation. Catalyzes the ATP-dependent biosynthesis of glutamine from glutamate and ammonia. The chain is Glutamine synthetase from Pyrococcus abyssi (strain GE5 / Orsay).